Reading from the N-terminus, the 173-residue chain is ATP-dependent protease subunit HslV (173 aa).

T2 is an active-site residue. Na(+)-binding residues include G158, D161, and S164.

Belongs to the peptidase T1B family. HslV subfamily. In terms of assembly, a double ring-shaped homohexamer of HslV is capped on each side by a ring-shaped HslU homohexamer. The assembly of the HslU/HslV complex is dependent on binding of ATP.

It is found in the cytoplasm. The catalysed reaction is ATP-dependent cleavage of peptide bonds with broad specificity.. Allosterically activated by HslU binding. Its function is as follows. Protease subunit of a proteasome-like degradation complex believed to be a general protein degrading machinery. The protein is ATP-dependent protease subunit HslV of Mannheimia haemolytica (Pasteurella haemolytica).